Reading from the N-terminus, the 121-residue chain is Large ribosomal subunit protein bL19 (121 aa).

This sequence belongs to the bacterial ribosomal protein bL19 family.

This protein is located at the 30S-50S ribosomal subunit interface and may play a role in the structure and function of the aminoacyl-tRNA binding site. In Mesomycoplasma hyopneumoniae (strain 7448) (Mycoplasma hyopneumoniae), this protein is Large ribosomal subunit protein bL19.